The primary structure comprises 508 residues: Adenosine deaminase (508 aa).

An N-terminal signal peptide occupies residues 1 to 18 (MFSQLVVWLLATSTVCLA).

It belongs to the metallo-dependent hydrolases superfamily. Adenosine and AMP deaminases family. ADGF subfamily. Zn(2+) is required as a cofactor. In terms of tissue distribution, salivary gland (at protein level).

It localises to the secreted. It catalyses the reaction adenosine + H2O + H(+) = inosine + NH4(+). Catalyzes the deamination of adenosine to inosine. This Lutzomyia longipalpis (Sand fly) protein is Adenosine deaminase.